A 49-amino-acid chain; its full sequence is Large ribosomal subunit protein bL33 (49 aa).

The protein belongs to the bacterial ribosomal protein bL33 family.

In Fervidobacterium nodosum (strain ATCC 35602 / DSM 5306 / Rt17-B1), this protein is Large ribosomal subunit protein bL33.